Reading from the N-terminus, the 5125-residue chain is Usherin (5125 aa).

The first 33 residues, 1–33 (MYYLALSSGFLGQAIKTSILAYLASVLLAASQG), serve as a signal peptide directing secretion. N-linked (GlcNAc...) asparagine glycosylation is found at N120, N229, N257, N273, N414, N447, and N468. Residues 273 to 513 (NVSLTNREIL…AVDEITIIGR (241 aa)) form the Laminin N-terminal domain. 39 cysteine pairs are disulfide-bonded: C514–C523, C516–C532, C534–C545, C548–C568, C571–C580, C573–C601, C604–C613, C616–C634, C637–C651, C639–C658, C660–C669, C672–C687, C690–C704, C692–C711, C713–C722, C725–C740, C743–C755, C745–C762, C764–C773, C776–C788, C791–C804, C793–C811, C813–C822, C825–C840, C843–C857, C845–C864, C866–C875, C878–C893, C896–C909, C898–C916, C918–C927, C930–C944, C947–C959, C949–C966, C981–C995, C998–C1010, C1000–C1017, C1019–C1028, and C1031–C1046. 10 consecutive Laminin EGF-like domains span residues 514 to 570 (CQCH…NCKP), 571 to 636 (CQCH…VCKH), 637 to 689 (CDCN…CCRP), 690 to 742 (CDCN…GCEP), 743 to 790 (CHCN…ACEV), 791 to 842 (CDCN…LCLP), 843 to 895 (CNCE…GCQA), 896 to 946 (CDCD…GCLP), 947 to 997 (CLCH…RCRP), and 998 to 1048 (CHCH…ACSK). N646 carries N-linked (GlcNAc...) asparagine glycosylation. N-linked (GlcNAc...) asparagine glycosylation is found at N835 and N852. Residue N884 is glycosylated (N-linked (GlcNAc...) asparagine). A glycan (N-linked (GlcNAc...) asparagine) is linked at N940. The N-linked (GlcNAc...) asparagine glycan is linked to N1007. Fibronectin type-III domains lie at 1054–1142 (PPPR…TKPE), 1146–1240 (GHLN…APPQ), 1241–1356 (RQEP…SAPV), and 1357–1461 (FMAA…AAPA). N-linked (GlcNAc...) asparagine glycans are attached at residues N1067, N1149, N1170, N1221, N1304, and N1381. Laminin G-like domains follow at residues 1510 to 1697 (TKGT…WEGC) and 1702 to 1879 (EEGV…QDGC). Intrachain disulfides connect C1660–C1697 and C1850–C1879. Fibronectin type-III domains follow at residues 1857 to 1943 (TRGA…SAPH), 1945 to 2042 (VPTP…TPQE), 2043 to 2132 (APQE…LPPE), 2133 to 2230 (RVDP…TVPE), 2231 to 2318 (GVPA…APPE), 2319 to 2421 (GTVN…MPPG), 2425 to 2519 (GLLS…TTED), 2520 to 2613 (KPGP…TPEG), 2614 to 2709 (IPGP…TRPS), 2713 to 2806 (GVQP…THPA), 2807 to 2910 (LPQE…TLAG), 2914 to 3005 (RGAT…TWEE), 3009 to 3099 (GMRP…TPSG), 3380 to 3485 (ATEE…TRED), 3486 to 3577 (VPQG…TRGV), 3580 to 3670 (SVPP…AAPQ), 3672 to 3762 (VWVT…TPED), 3765 to 3852 (PPCN…TLEA), 3853 to 3950 (APVG…TLEA), 3951 to 4054 (PPQD…SAPS), 4055 to 4143 (GLMN…APPD), 4144 to 4251 (SQMA…APPD), 4252 to 4344 (GLSP…ASPA), 4345 to 4432 (GVSP…APPE), 4433 to 4517 (DMDP…TSPS), 4518 to 4620 (APSG…IPPL), 4625 to 4720 (PHLE…TGPA), 4721 to 4813 (PPEG…THPA), and 4814 to 4916 (PPSG…TKKE). Residues 1930–1950 (SDWSRGRTLGSAPHSVPTPSR) are disordered.

As to quaternary structure, interacts with collagen IV and fibronectin via its laminin EGF-like domains. Interaction with collagen may be required for stable integration into the basement membrane. Interacts with NINL. Interacts with USH1C. Interacts (via the cytoplasmic region) with PDZD7. Component of USH2 complex, composed of ADGRV1, PDZD7, USH2A and WHRN. Interacts with ADGRV1/MASS1 (via N-terminal PDZ domain). Interacts (via the cytoplasmic region) with WHRN. Interacts (via the cytoplasmic region) with VEZT and MYO7A (via MyTH4-FERM domains); the interaction associates VEZT with the USH2 complex at the stereocilia base. Present in the synaptic terminals of inner ear hair cells (at protein level). Predominantly expressed in the retina and cochlea. Weakly expressed in brain and kidney. Detectable from E17 in the neural epithelium, but not in the retinal pigment epithelium (RPE) of the developing retina. After birth, it is expressed at P7 and remains expressed during adulthood.

Its subcellular location is the secreted. It is found in the cell projection. It localises to the stereocilium membrane. The protein localises to the photoreceptor inner segment. Functionally, involved in hearing and vision as member of the USH2 complex. In the inner ear, required for the hair bundle ankle formation, which connects growing stereocilia in developing cochlear hair cells. In retina photoreceptors, the USH2 complex is required for the maintenance of periciliary membrane complex that seems to play a role in regulating intracellular protein transport. This chain is Usherin (Ush2a), found in Rattus norvegicus (Rat).